Here is a 204-residue protein sequence, read N- to C-terminus: MSKIQIVFYSMYGHIHTMAEAVADGVRSVGGCSAELLQVPELISEEVLEKYGAKAARAAFAHIPTATVERLAEADAIIFGTPTRFGNMAAQMRNFLDQTGKLWLSGGLVGKVGSVFASTATQHGGQETTITSFHSTLLHHGMIIVGVPYTEQRLLTMDEISGGSPYGATTLAGGDGSRRPSENELAIARFQGAHVAKITARLTA.

One can recognise a Flavodoxin-like domain in the interval 4–195 (IQIVFYSMYG…AIARFQGAHV (192 aa)). FMN is bound by residues 10–15 (SMYGHI) and 83–85 (TRF). Y12 serves as a coordination point for NAD(+). W103 is a substrate binding site. Residues 118 to 124 (STATQHG) and H139 contribute to the FMN site.

This sequence belongs to the WrbA family. Requires FMN as cofactor.

The enzyme catalyses a quinone + NADH + H(+) = a quinol + NAD(+). It catalyses the reaction a quinone + NADPH + H(+) = a quinol + NADP(+). The protein is NAD(P)H dehydrogenase (quinone) of Trichlorobacter lovleyi (strain ATCC BAA-1151 / DSM 17278 / SZ) (Geobacter lovleyi).